The sequence spans 136 residues: Large ribosomal subunit protein eL27 (136 aa).

The KOW domain maps to 5 to 40; that stretch reads MKPGKVVMVLAGRYAGRKAVIVKNIDDGTADRPYSH.

This sequence belongs to the eukaryotic ribosomal protein eL27 family. In terms of assembly, component of the large ribosomal subunit.

Its subcellular location is the cytoplasm. The protein resides in the cytosol. It localises to the rough endoplasmic reticulum. Functionally, component of the large ribosomal subunit. The sequence is that of Large ribosomal subunit protein eL27 (rpl27) from Hippocampus comes (Tiger tail seahorse).